A 359-amino-acid chain; its full sequence is Outer membrane protein P5 (359 aa).

Positions 1 to 21 (MKKTAIALVVAGLAAASVAQA) are cleaved as a signal peptide. A run of 8 beta stranded transmembrane segments spans residues 27–37 (TFYAGVKAGQG), 64–75 (TFTYGVFGGYQI), 83–91 (LAAELGYDD), 110–121 (HGAYLSLKGSYE), 126–134 (LDVYGKAGV), 164–173 (GLFAVGAEYA), 178–185 (LAVRLEYQ), and 211–219 (CINAGISYR). In terms of domain architecture, OmpA-like spans 233–359 (MVSKTFSLNS…RVEIAVNGTK (127 aa)). Cys332 and Cys344 form a disulfide bridge.

It belongs to the outer membrane OOP (TC 1.B.6) superfamily. OmpA family. Monomer and homodimer.

The protein resides in the cell outer membrane. It localises to the fimbrium. Acts as a fimbriae subunit, allowing adhesion to host cells. In terms of biological role, with TolR probably plays a role in maintaining the position of the peptidoglycan cell wall in the periplasm. Acts as a porin with low permeability that allows slow penetration of small solutes; an internal gate slows down solute passage. In Haemophilus influenzae, this protein is Outer membrane protein P5.